A 399-amino-acid chain; its full sequence is Transaminase BacF (399 aa).

Pyridoxal 5'-phosphate is bound by residues 103 to 104 (GK), Y128, N178, Y209, and 236 to 238 (SFS). At K239 the chain carries N6-(pyridoxal phosphate)lysine. Residue R247 participates in pyridoxal 5'-phosphate binding.

Belongs to the class-I pyridoxal-phosphate-dependent aminotransferase family. In terms of assembly, homodimer. It depends on pyridoxal 5'-phosphate as a cofactor.

It is found in the cytoplasm. Its pathway is antibiotic biosynthesis; bacilysin biosynthesis. In terms of biological role, part of the bacABCDEF operon responsible for the biosynthesis of the nonribosomally synthesized dipeptide antibiotic bacilysin, composed of L-alanine and L-anticapsin. Bacilysin is an irreversible inactivator of the glutaminase domain of glucosamine synthetase. Catalyzes the reductive amination of the C2 ketone of tetrahydro-hydroxyphenylpyruvate (H4HPP), with L-Phe as an amino donor, to yield tetrahydrotyrosine (H4Tyr) diastereomer. D-Phe is not an effective amino donor. BacF associated to BacG converts 3E,7R- and 3Z,7R-ex-H2HPP to 2S,4R,7R- and 2S,4S,7R-H4Tyr, respectively. Given that bacilysin has the 2S,4S stereochemistry in its anticapsin moiety, it is likely that the 2S,4S-H4Tyr is the diastereomer used for the biosynthesis. This chain is Transaminase BacF, found in Bacillus subtilis (strain 168).